The sequence spans 79 residues: ESX secretion system protein YukD (79 aa).

It belongs to the EsaB family.

Required for YukE secretion. Probable component or regulator of the ESX/ESAT-6-like secretion system (BsEss). The polypeptide is ESX secretion system protein YukD (yukD) (Bacillus subtilis (strain 168)).